We begin with the raw amino-acid sequence, 621 residues long: Chaperone protein HtpG (621 aa).

Residues 1–328 (MKQEKKKFDA…SEDLPLNISR (328 aa)) are a; substrate-binding. The segment at 329–544 (ESLQHNNVLE…EAAMDIRMER (216 aa)) is b. The interval 479–498 (VDQATSSSEEKNKDDKKSDD) is disordered. Over residues 486 to 498 (SEEKNKDDKKSDD) the composition is skewed to basic and acidic residues. Residues 545 to 621 (FLIEQKQIAN…LNDIVQKAIL (77 aa)) form a c region.

Belongs to the heat shock protein 90 family. Homodimer.

Its subcellular location is the cytoplasm. Molecular chaperone. Has ATPase activity. The protein is Chaperone protein HtpG of Rickettsia bellii (strain OSU 85-389).